The following is a 213-amino-acid chain: Eukaryotic translation initiation factor isoform 4E (213 aa).

The interval 1-37 is disordered; the sequence is MATEVAAAVPPPQLDAEENSGLEAAAAEAKIQPSSGP. MRNA contacts are provided by residues 56 to 61, Lys-88, and 106 to 107; these read QGAAWG and WE. Residues Cys-111 and Cys-150 are joined by a disulfide bond. MRNA contacts are provided by residues 157-162 and 202-205; these read RQRQDK and KRER.

The protein belongs to the eukaryotic initiation factor 4E family. As to quaternary structure, EIF4F is a multi-subunit complex, the composition of which varies with external and internal environmental conditions. It is composed of at least EIF4A, EIF4E and EIF4G. EIF4E is also known to interact with other partners. In higher plants two isoforms of EIF4F have been identified, named isoform EIF4F and isoform EIF(iso)4F. Isoform EIF4F has subunits p220 and p26, whereas isoform EIF(iso)4F has subunits p82 and p28. In terms of assembly, (Microbial infection) Interacts with potyvirus viral genome-linked protein (VPg) of plum pox virus (PPV) strain D both in nucleus and cytoplasm; this interaction is possible in susceptible hosts but is impaired in resistant plants. Post-translationally, according to the redox status, the Cys-111-Cys-150 disulfide bridge may have a role in regulating protein function by affecting its ability to bind capped mRNA. In terms of tissue distribution, mostly expressed in leaves, flower buds, leaf buds and anthers, to a lower extent in roots, stems and green immature fruit, and, at low levels, in petals.

The protein resides in the cytoplasm. It is found in the nucleus. Functionally, component of the protein complex eIF4F, which is involved in the recognition of the mRNA cap, ATP-dependent unwinding of 5'-terminal secondary structure and recruitment of mRNA to the ribosome. Recognizes and binds the 7-methylguanosine-containing mRNA cap during an early step in the initiation of protein synthesis and facilitates ribosome binding by inducing the unwinding of the mRNAs secondary structures. Key component of recessive resistance to potyviruses such as the plum pox virus (PPV) strain D. (Microbial infection) Susceptibility host factor required for viral infection by recruiting viral RNAs to the host ribosomal complex via an interaction with viral genome-linked protein (VPg). In Prunus domestica (Garden plum), this protein is Eukaryotic translation initiation factor isoform 4E.